We begin with the raw amino-acid sequence, 151 residues long: Neuroglobin (151 aa).

Positions 1–149 (MERPEPELIR…VVQAMSRGWD (149 aa)) constitute a Globin domain. Cysteine 46 and cysteine 55 are disulfide-bonded. Heme b is bound by residues histidine 64 and histidine 96.

This sequence belongs to the globin family. In terms of assembly, monomer. Homodimer and homotetramer; disulfide-linked. Mainly monomeric but also detected as part of homodimers and homotetramers. Interacts with 14-3-3 proteins; regulates the phosphorylation of NGB. Could interact (ferrous form) with G-alpha(i) proteins (GTP-bound form). Phosphorylated during hypoxia by ERK1/ERK2. Phosphorylation regulates the heme pocket hexacoordination preventing the association of His-64 with the heme metal center. Thereby, promotes the access of dioxygen and nitrite to the heme and stimulates the nitrite reductase activity. Phosphorylation during hypoxia is stabilized by 14-3-3 proteins. Post-translationally, an intramolecular Cys-46/Cys-55 disulfide bond, not necessarily present in orthologs, regulates the heme pocket hexacoordination preventing the association of His-64 with the heme metal center. Thereby, promotes the access of dioxygen and nitrite to the heme and stimulates the nitrite reductase activity. In terms of tissue distribution, predominantly expressed in brain, the strongest expression is seen in the frontal lobe, the subthalamic nucleus and the thalamus.

The protein localises to the cytoplasm. It localises to the cytosol. Its subcellular location is the mitochondrion matrix. The catalysed reaction is Fe(III)-heme b-[protein] + nitric oxide + H2O = Fe(II)-heme b-[protein] + nitrite + 2 H(+). In terms of biological role, monomeric globin with a bis-histidyl six-coordinate heme-iron atom through which it can bind dioxygen, carbon monoxide and nitric oxide. Could help transport oxygen and increase its availability to the metabolically active neuronal tissues, though its low quantity in tissues as well as its high affinity for dioxygen, which may limit its oxygen-releasing ability, argue against it. The ferrous/deoxygenated form exhibits a nitrite reductase activity and it could produce nitric oxide which in turn inhibits cellular respiration in response to hypoxia. In its ferrous/deoxygenated state, it may also exhibit GDI (Guanine nucleotide Dissociation Inhibitor) activity toward heterotrimeric G-alpha proteins, thereby regulating signal transduction to facilitate neuroprotective responses in the wake of hypoxia and associated oxidative stress. The chain is Neuroglobin from Homo sapiens (Human).